The sequence spans 149 residues: Nucleoside diphosphate kinase (149 aa).

6 residues coordinate ATP: Lys9, Phe57, Arg85, Thr91, Arg102, and Asn112. The active-site Pros-phosphohistidine intermediate is His115.

It belongs to the NDK family. Mg(2+) is required as a cofactor.

It is found in the cytoplasm. The catalysed reaction is a 2'-deoxyribonucleoside 5'-diphosphate + ATP = a 2'-deoxyribonucleoside 5'-triphosphate + ADP. It carries out the reaction a ribonucleoside 5'-diphosphate + ATP = a ribonucleoside 5'-triphosphate + ADP. Major role in the synthesis of nucleoside triphosphates other than ATP. The ATP gamma phosphate is transferred to the NDP beta phosphate via a ping-pong mechanism, using a phosphorylated active-site intermediate. The sequence is that of Nucleoside diphosphate kinase from Methanosarcina barkeri (strain Fusaro / DSM 804).